A 185-amino-acid chain; its full sequence is Dual specificity protein phosphatase 3 (185 aa).

Residues 28 to 179 form the Tyrosine-protein phosphatase domain; sequence QPCNEVVPRV…LCQLNDRLAK (152 aa). The active-site Phosphocysteine intermediate is Cys-124.

The protein belongs to the protein-tyrosine phosphatase family. Non-receptor class dual specificity subfamily. Microtubule inner protein component of sperm flagellar doublet microtubules. Interacts with VRK3; this interaction activates DUSP3 phosphatase activity.

Its subcellular location is the nucleus. The protein resides in the cytoplasm. The protein localises to the cytoskeleton. It is found in the flagellum axoneme. It carries out the reaction O-phospho-L-tyrosyl-[protein] + H2O = L-tyrosyl-[protein] + phosphate. It catalyses the reaction O-phospho-L-seryl-[protein] + H2O = L-seryl-[protein] + phosphate. The catalysed reaction is O-phospho-L-threonyl-[protein] + H2O = L-threonyl-[protein] + phosphate. Shows activity both for tyrosine-protein phosphate and serine-protein phosphate, but displays a strong preference toward phosphotyrosines. Specifically dephosphorylates and inactivates ERK1 and ERK2. The polypeptide is Dual specificity protein phosphatase 3 (Dusp3) (Mus musculus (Mouse)).